A 145-amino-acid polypeptide reads, in one-letter code: D-aminoacyl-tRNA deacylase (145 aa).

Positions 137-138 match the Gly-cisPro motif, important for rejection of L-amino acids motif; the sequence is GP.

Belongs to the DTD family. In terms of assembly, homodimer.

The protein resides in the cytoplasm. The catalysed reaction is glycyl-tRNA(Ala) + H2O = tRNA(Ala) + glycine + H(+). It catalyses the reaction a D-aminoacyl-tRNA + H2O = a tRNA + a D-alpha-amino acid + H(+). In terms of biological role, an aminoacyl-tRNA editing enzyme that deacylates mischarged D-aminoacyl-tRNAs. Also deacylates mischarged glycyl-tRNA(Ala), protecting cells against glycine mischarging by AlaRS. Acts via tRNA-based rather than protein-based catalysis; rejects L-amino acids rather than detecting D-amino acids in the active site. By recycling D-aminoacyl-tRNA to D-amino acids and free tRNA molecules, this enzyme counteracts the toxicity associated with the formation of D-aminoacyl-tRNA entities in vivo and helps enforce protein L-homochirality. The sequence is that of D-aminoacyl-tRNA deacylase from Rhodococcus opacus (strain B4).